A 299-amino-acid polypeptide reads, in one-letter code: Virginiamycin B lyase (299 aa).

His229 serves as a coordination point for substrate. Position 269 (Glu269) interacts with Mg(2+). Residue His271 is the Proton acceptor of the active site. Residue Glu286 participates in Mg(2+) binding.

The protein belongs to the Vgb family. In terms of assembly, monomer. Mg(2+) serves as cofactor.

In terms of biological role, inactivates the type B streptogramin antibiotics by linearizing the lactone ring at the ester linkage, generating a free phenylglycine carboxylate and converting the threonyl moiety into 2-amino-butenoic acid. The polypeptide is Virginiamycin B lyase (Bordetella bronchiseptica (strain ATCC BAA-588 / NCTC 13252 / RB50) (Alcaligenes bronchisepticus)).